A 112-amino-acid chain; its full sequence is MAM and fibronectin type III domain-containing protein 2 (112 aa).

Component of the acid-insoluble and acid-soluble organic matrix of the aragonitic skeleton (at protein level).

The protein localises to the secreted. In Acropora millepora (Staghorn coral), this protein is MAM and fibronectin type III domain-containing protein 2.